Reading from the N-terminus, the 207-residue chain is Guanylate kinase (207 aa).

The Guanylate kinase-like domain occupies 5 to 183 (GTLYIISAPS…ALYELEAIVE (179 aa)). 12–19 (APSGAGKT) provides a ligand contact to ATP.

It belongs to the guanylate kinase family.

The protein localises to the cytoplasm. The catalysed reaction is GMP + ATP = GDP + ADP. Its function is as follows. Essential for recycling GMP and indirectly, cGMP. In Alcanivorax borkumensis (strain ATCC 700651 / DSM 11573 / NCIMB 13689 / SK2), this protein is Guanylate kinase.